The chain runs to 197 residues: Glycerol-3-phosphate acyltransferase (197 aa).

5 helical membrane-spanning segments follow: residues 2-22 (LDVI…AIVV), 53-73 (AGIT…LAWL), 78-98 (PVVA…PVYF), 112-132 (VILA…LAVA), and 152-174 (YMLW…AAIV).

It belongs to the PlsY family. As to quaternary structure, probably interacts with PlsX.

The protein localises to the cell inner membrane. The catalysed reaction is an acyl phosphate + sn-glycerol 3-phosphate = a 1-acyl-sn-glycero-3-phosphate + phosphate. The protein operates within lipid metabolism; phospholipid metabolism. Catalyzes the transfer of an acyl group from acyl-phosphate (acyl-PO(4)) to glycerol-3-phosphate (G3P) to form lysophosphatidic acid (LPA). This enzyme utilizes acyl-phosphate as fatty acyl donor, but not acyl-CoA or acyl-ACP. The protein is Glycerol-3-phosphate acyltransferase of Halorhodospira halophila (strain DSM 244 / SL1) (Ectothiorhodospira halophila (strain DSM 244 / SL1)).